We begin with the raw amino-acid sequence, 152 residues long: Large ribosomal subunit protein bL9 (152 aa).

It belongs to the bacterial ribosomal protein bL9 family.

In terms of biological role, binds to the 23S rRNA. This Rippkaea orientalis (strain PCC 8801 / RF-1) (Cyanothece sp. (strain PCC 8801)) protein is Large ribosomal subunit protein bL9.